A 99-amino-acid chain; its full sequence is Acylphosphatase (99 aa).

One can recognise an Acylphosphatase-like domain in the interval 5–97 (IRQVMVRGRV…YAGERFSILS (93 aa)). Active-site residues include arginine 20 and asparagine 38.

The protein belongs to the acylphosphatase family.

The catalysed reaction is an acyl phosphate + H2O = a carboxylate + phosphate + H(+). This chain is Acylphosphatase (acyP), found in Rhodopseudomonas palustris (strain BisB5).